We begin with the raw amino-acid sequence, 65 residues long: Large ribosomal subunit protein uL29 (65 aa).

It belongs to the universal ribosomal protein uL29 family.

In Lactobacillus johnsonii (strain CNCM I-12250 / La1 / NCC 533), this protein is Large ribosomal subunit protein uL29.